The sequence spans 523 residues: Dynein regulatory complex subunit 3 (523 aa).

LRR repeat units lie at residues 44-65, 66-87, 88-109, 110-131, and 132-153; these read DVLS…WQFE, NLRK…ENLA, HLVW…DTLV, NLED…DALV, and KLQV…IYLR. One can recognise an LRRCT domain in the interval 166–204; sequence NPISEAEDYKMFICAYLPDLMYLDYRRIDDHTKKLAEAK. Coiled coils occupy residues 208-242 and 366-391; these read SIDE…AFVE and MTLE…VDMV.

The protein belongs to the DRC3 family. In terms of assembly, component of the nexin-dynein regulatory complex (N-DRC). Interacts with DRC1. Interacts with TCTE1/DRC5. Interacts with DRC7.

Its subcellular location is the cytoplasm. It is found in the cytoskeleton. It localises to the cilium axoneme. The protein localises to the cell projection. The protein resides in the cilium. Its subcellular location is the flagellum axoneme. It is found in the flagellum. Functionally, component of the nexin-dynein regulatory complex (N-DRC) a key regulator of ciliary/flagellar motility which maintains the alignment and integrity of the distal axoneme and regulates microtubule sliding in motile axonemes. The protein is Dynein regulatory complex subunit 3 (DRC3) of Homo sapiens (Human).